Reading from the N-terminus, the 334-residue chain is Galactinol synthase 3 (334 aa).

Lysine 97 is a catalytic residue. Aspartate 113, aspartate 115, and histidine 251 together coordinate Mn(2+).

This sequence belongs to the glycosyltransferase 8 family. Galactosyltransferase subfamily. A divalent metal cation serves as cofactor.

The protein localises to the cytoplasm. It catalyses the reaction myo-inositol + UDP-alpha-D-galactose = alpha-D-galactosyl-(1-&gt;3)-1D-myo-inositol + UDP + H(+). Galactinol synthase involved in the biosynthesis of raffinose family oligosaccharides (RFOs) that function as osmoprotectants. May promote plant stress tolerance. This is Galactinol synthase 3 (GOLS3) from Arabidopsis thaliana (Mouse-ear cress).